A 240-amino-acid chain; its full sequence is Small ribosomal subunit protein uS3 (240 aa).

The region spanning 21–92 (LNEFFTRELA…TIVLYAERVQ (72 aa)) is the KH type-2 domain. 2 positions are modified to phosphothreonine: T44 and T70. S97 carries the post-translational modification Phosphoserine. K106 participates in a covalent cross-link: Glycyl lysine isopeptide (Lys-Gly) (interchain with G-Cter in ubiquitin). Position 129 is a phosphoserine (S129). Residues K132 and K141 each participate in a glycyl lysine isopeptide (Lys-Gly) (interchain with G-Cter in ubiquitin) cross-link. Omega-N-methylarginine; by SFM1 is present on R146. Glycyl lysine isopeptide (Lys-Gly) (interchain with G-Cter in ubiquitin) cross-links involve residues K151, K200, and K212. Residues 212–240 (KEEEPILAPSVKDYRPAEETEAQAEPVEA) form a disordered region. S221 is subject to Phosphoserine. Residues 230-240 (ETEAQAEPVEA) are compositionally biased toward acidic residues. Phosphothreonine is present on T231.

This sequence belongs to the universal ribosomal protein uS3 family. Component of the small ribosomal subunit (SSU). Mature yeast ribosomes consist of a small (40S) and a large (60S) subunit. The 40S small subunit contains 1 molecule of ribosomal RNA (18S rRNA) and 33 different proteins (encoded by 57 genes). The large 60S subunit contains 3 rRNA molecules (25S, 5.8S and 5S rRNA) and 46 different proteins (encoded by 81 genes). In terms of processing, ubiquitinated at Lys-212 in response to stalled ribosomes. Ubiquitination leads to activation of the No-Go Decay (NGD) pathway and degradation of non-functional 18S rRNA: first monoubiquitinated at Lys-212 by MAG2, followed by formation of 'Lys-63'-linked polyubiquitin chains on monoubiquitin by HEL2 and RSP5.

Its subcellular location is the cytoplasm. In terms of biological role, component of the ribosome, a large ribonucleoprotein complex responsible for the synthesis of proteins in the cell. The small ribosomal subunit (SSU) binds messenger RNAs (mRNAs) and translates the encoded message by selecting cognate aminoacyl-transfer RNA (tRNA) molecules. The large subunit (LSU) contains the ribosomal catalytic site termed the peptidyl transferase center (PTC), which catalyzes the formation of peptide bonds, thereby polymerizing the amino acids delivered by tRNAs into a polypeptide chain. The nascent polypeptides leave the ribosome through a tunnel in the LSU and interact with protein factors that function in enzymatic processing, targeting, and the membrane insertion of nascent chains at the exit of the ribosomal tunnel. This chain is Small ribosomal subunit protein uS3, found in Saccharomyces cerevisiae (strain ATCC 204508 / S288c) (Baker's yeast).